The following is a 338-amino-acid chain: Glyceraldehyde-3-phosphate dehydrogenase, cytosolic (338 aa).

Residues 13 to 14 (RI), Asp-35, and Arg-82 contribute to the NAD(+) site. Residues 153–155 (SCT), Thr-184, 213–214 (TG), and Arg-236 each bind D-glyceraldehyde 3-phosphate. Catalysis depends on Cys-154, which acts as the Nucleophile. Asn-318 provides a ligand contact to NAD(+).

This sequence belongs to the glyceraldehyde-3-phosphate dehydrogenase family. As to quaternary structure, homotetramer.

The protein localises to the cytoplasm. The enzyme catalyses D-glyceraldehyde 3-phosphate + phosphate + NAD(+) = (2R)-3-phospho-glyceroyl phosphate + NADH + H(+). Its pathway is carbohydrate degradation; glycolysis; pyruvate from D-glyceraldehyde 3-phosphate: step 1/5. Its function is as follows. Key enzyme in glycolysis that catalyzes the first step of the pathway by converting D-glyceraldehyde 3-phosphate (G3P) into 3-phospho-D-glyceroyl phosphate. Essential for the maintenance of cellular ATP levels and carbohydrate metabolism. In Dianthus caryophyllus (Carnation), this protein is Glyceraldehyde-3-phosphate dehydrogenase, cytosolic (GAPC).